The chain runs to 340 residues: Geranylgeranyl pyrophosphate synthase atmG (340 aa).

Positions 19–48 (NLDASYPTSSSLSTEPIDTRSSSPQGSAST) are enriched in polar residues. The tract at residues 19–51 (NLDASYPTSSSLSTEPIDTRSSSPQGSASTPVD) is disordered. Lys69, Arg72, and His101 together coordinate isopentenyl diphosphate. Positions 108 and 112 each coordinate Mg(2+). Residue Arg117 coordinates dimethylallyl diphosphate. Isopentenyl diphosphate is bound at residue Arg118. Residues Lys195, Thr196, and Gln229 each contribute to the dimethylallyl diphosphate site. Residue Asp232 participates in Mg(2+) binding. Dimethylallyl diphosphate is bound by residues Asn236, Lys246, and Lys256.

Belongs to the FPP/GGPP synthase family. The cofactor is Mg(2+).

The enzyme catalyses isopentenyl diphosphate + dimethylallyl diphosphate = (2E)-geranyl diphosphate + diphosphate. It carries out the reaction isopentenyl diphosphate + (2E)-geranyl diphosphate = (2E,6E)-farnesyl diphosphate + diphosphate. It catalyses the reaction isopentenyl diphosphate + (2E,6E)-farnesyl diphosphate = (2E,6E,10E)-geranylgeranyl diphosphate + diphosphate. In terms of biological role, geranylgeranyl pyrophosphate synthase; part of the ATM1 gene cluster that mediates the biosynthesis of aflatrem, a tremorgenic mycotoxin with acute neurotoxic effects. Synthesis of geranylgeranyl diphosphate (GGPP) by AtmG (a GGPP synthase) precedes condensation of GGPP with indole 3-glycerol phosphate, followed by epoxidation and cyclization by AtmM (a FAD-dependent monooxygenase) and AtmC (a prenyltransferase) to produce paspaline. AtmB is also essential for paspaline production, but its exact role has not been identified yet. AtmP, a cytochrome P450 monooxygenase, subsequently converts paspaline to 13-desoxypaxilline via PC-M6 by removal of the C-30 methyl group and oxidation at C-10. AtmQ, a cytochrome P450 monooxygenase, then catalyzes the oxidation of 13-desoxypaxilline, first at C-7 to produce paspalicine and then at C-13 to form paspalinine. Finally, AtmD prenylates paspalinine to form aflatrem. This is Geranylgeranyl pyrophosphate synthase atmG from Aspergillus flavus.